The sequence spans 193 residues: MESQNKASLPVMDGLERRVVASQSEGASTCDLLLRVLALVLTLAAAIVLGVDKQTKVVPIKIVDTLPAINLPVSAKWHYLSAFTYSVASNAIACSYAALSLVLAVSGKKGIMSIVIVLDLLMVAMLFSSNGAALAIGLMGYQGNSHVRWTKVCHVFGRFCNQVAVSISLSLLGSILFLLLVGITSLRLHKKSK.

Over 1 to 30 the chain is Cytoplasmic; the sequence is MESQNKASLPVMDGLERRVVASQSEGASTC. The helical transmembrane segment at 31–51 threads the bilayer; it reads DLLLRVLALVLTLAAAIVLGV. The Extracellular segment spans residues 52–86; that stretch reads DKQTKVVPIKIVDTLPAINLPVSAKWHYLSAFTYS. The chain crosses the membrane as a helical span at residues 87-107; sequence VASNAIACSYAALSLVLAVSG. Topologically, residues 108 to 113 are cytoplasmic; sequence KKGIMS. The chain crosses the membrane as a helical span at residues 114–134; the sequence is IVIVLDLLMVAMLFSSNGAAL. Residues 135 to 162 are Extracellular-facing; it reads AIGLMGYQGNSHVRWTKVCHVFGRFCNQ. The helical transmembrane segment at 163-183 threads the bilayer; it reads VAVSISLSLLGSILFLLLVGI. The Cytoplasmic portion of the chain corresponds to 184–193; sequence TSLRLHKKSK.

This sequence belongs to the Casparian strip membrane proteins (CASP) family. Homodimer and heterodimers.

The protein localises to the cell membrane. The sequence is that of CASP-like protein 1E1 from Populus trichocarpa (Western balsam poplar).